The primary structure comprises 207 residues: Large ribosomal subunit protein uL4 (207 aa).

The segment at 49-78 (HAVKNRSAVSGGGRKPWRQKGTGRARQGSI) is disordered.

This sequence belongs to the universal ribosomal protein uL4 family. As to quaternary structure, part of the 50S ribosomal subunit.

Its function is as follows. One of the primary rRNA binding proteins, this protein initially binds near the 5'-end of the 23S rRNA. It is important during the early stages of 50S assembly. It makes multiple contacts with different domains of the 23S rRNA in the assembled 50S subunit and ribosome. Functionally, forms part of the polypeptide exit tunnel. This is Large ribosomal subunit protein uL4 from Streptococcus uberis (strain ATCC BAA-854 / 0140J).